The primary structure comprises 336 residues: 3-isopropylmalate dehydrogenase (336 aa).

Positions 87, 97, 121, and 211 each coordinate substrate. Asp-211, Asp-235, and Asp-239 together coordinate Mg(2+). Gly-271–Asp-283 lines the NAD(+) pocket.

This sequence belongs to the isocitrate and isopropylmalate dehydrogenases family. LeuB type 2 subfamily. As to quaternary structure, homodimer. The cofactor is Mg(2+). It depends on Mn(2+) as a cofactor.

Its subcellular location is the cytoplasm. The enzyme catalyses (2R,3S)-3-isopropylmalate + NAD(+) = 4-methyl-2-oxopentanoate + CO2 + NADH. Its pathway is amino-acid biosynthesis; L-leucine biosynthesis; L-leucine from 3-methyl-2-oxobutanoate: step 3/4. Catalyzes the oxidation of 3-carboxy-2-hydroxy-4-methylpentanoate (3-isopropylmalate) to 3-carboxy-4-methyl-2-oxopentanoate. The product decarboxylates to 4-methyl-2 oxopentanoate. This chain is 3-isopropylmalate dehydrogenase, found in Mycolicibacterium vanbaalenii (strain DSM 7251 / JCM 13017 / BCRC 16820 / KCTC 9966 / NRRL B-24157 / PYR-1) (Mycobacterium vanbaalenii).